A 156-amino-acid polypeptide reads, in one-letter code: Small ribosomal subunit protein uS7 (156 aa).

The protein belongs to the universal ribosomal protein uS7 family. Part of the 30S ribosomal subunit. Contacts proteins S9 and S11.

One of the primary rRNA binding proteins, it binds directly to 16S rRNA where it nucleates assembly of the head domain of the 30S subunit. Is located at the subunit interface close to the decoding center, probably blocks exit of the E-site tRNA. In Blochmanniella pennsylvanica (strain BPEN), this protein is Small ribosomal subunit protein uS7.